A 171-amino-acid polypeptide reads, in one-letter code: Large ribosomal subunit protein uL10 (171 aa).

This sequence belongs to the universal ribosomal protein uL10 family. As to quaternary structure, part of the ribosomal stalk of the 50S ribosomal subunit. The N-terminus interacts with L11 and the large rRNA to form the base of the stalk. The C-terminus forms an elongated spine to which L12 dimers bind in a sequential fashion forming a multimeric L10(L12)X complex.

Its function is as follows. Forms part of the ribosomal stalk, playing a central role in the interaction of the ribosome with GTP-bound translation factors. This chain is Large ribosomal subunit protein uL10, found in Sphingopyxis alaskensis (strain DSM 13593 / LMG 18877 / RB2256) (Sphingomonas alaskensis).